Here is a 182-residue protein sequence, read N- to C-terminus: Ribosome maturation factor RimM (182 aa).

Positions 102-182 (GEGDYYWKDL…TIEVDWDPGF (81 aa)) constitute a PRC barrel domain.

It belongs to the RimM family. As to quaternary structure, binds ribosomal protein uS19.

The protein resides in the cytoplasm. An accessory protein needed during the final step in the assembly of 30S ribosomal subunit, possibly for assembly of the head region. Essential for efficient processing of 16S rRNA. May be needed both before and after RbfA during the maturation of 16S rRNA. It has affinity for free ribosomal 30S subunits but not for 70S ribosomes. The chain is Ribosome maturation factor RimM from Pectobacterium carotovorum subsp. carotovorum (strain PC1).